We begin with the raw amino-acid sequence, 199 residues long: VAMP-like protein YKT62 (199 aa).

Positions 7-131 (LVLKCDPETR…PYLKEASDKF (125 aa)) constitute a Longin domain. The v-SNARE coiled-coil homology domain maps to 139-199 (KLLKIQRELD…KKTNSCCTLL (61 aa)). Cysteine 195 carries S-palmitoyl cysteine lipidation. Cysteine methyl ester is present on cysteine 196. Residue cysteine 196 is the site of S-geranylgeranyl cysteine attachment. A propeptide spans 197–199 (TLL) (removed in mature form).

The protein belongs to the synaptobrevin family. As to quaternary structure, interacts with SYP41. Core constituent of the SNARE complex required for membrane fusion at the trans-Golgi network.

The protein localises to the cell membrane. Functionally, involved in the secretory pathway. Essential for membrane fusion mediated by either SYP41 or SYP61; triggers the fusion of phospholipid vesicles containing SYP41 or SYP61 and VTI12. This chain is VAMP-like protein YKT62, found in Arabidopsis thaliana (Mouse-ear cress).